The primary structure comprises 224 residues: MSPIEPAASAIFGPRLGLARRYAEALAGPGVERGLVGPREVGRLWDRHLLNCAVIGELLERGDRVVDIGSGAGLPGVPLAIARPDLQVVLLEPLLRRTEFLREMVTDLGVAVEIVRGRAEESWVQDQLGGSDAAVSRAVAALDKLTKWSMPLIRPNGRMLAIKGERAHDEVREHRRVMIASGAVDVRVVTCGANYLRPPATVVFARRGKQIARGSARMASGGTA.

Residues glycine 69, leucine 74, alanine 119 to glutamate 120, and arginine 137 each bind S-adenosyl-L-methionine.

It belongs to the methyltransferase superfamily. RNA methyltransferase RsmG family.

Its subcellular location is the cytoplasm. In terms of biological role, specifically methylates the N7 position of guanine in position 518 of 16S rRNA. This Mycobacterium bovis (strain ATCC BAA-935 / AF2122/97) protein is Ribosomal RNA small subunit methyltransferase G.